A 373-amino-acid chain; its full sequence is Chaperone protein DnaJ (373 aa).

One can recognise a J domain in the interval 4 to 68 (DFYEILGVSR…QARANYDRFG (65 aa)). The CR-type zinc-finger motif lies at 132 to 214 (GGEKEIRINH…CGGQGHIQVS (83 aa)). Residues C145, C148, C162, C165, C188, C191, C202, and C205 each coordinate Zn(2+). CXXCXGXG motif repeat units follow at residues 145-152 (CKTCQGTG), 162-169 (CSTCGGVG), 188-195 (CPTCGGSG), and 202-209 (CESCGGQG).

This sequence belongs to the DnaJ family. In terms of assembly, homodimer. The cofactor is Zn(2+).

Its subcellular location is the cytoplasm. Participates actively in the response to hyperosmotic and heat shock by preventing the aggregation of stress-denatured proteins and by disaggregating proteins, also in an autonomous, DnaK-independent fashion. Unfolded proteins bind initially to DnaJ; upon interaction with the DnaJ-bound protein, DnaK hydrolyzes its bound ATP, resulting in the formation of a stable complex. GrpE releases ADP from DnaK; ATP binding to DnaK triggers the release of the substrate protein, thus completing the reaction cycle. Several rounds of ATP-dependent interactions between DnaJ, DnaK and GrpE are required for fully efficient folding. Also involved, together with DnaK and GrpE, in the DNA replication of plasmids through activation of initiation proteins. The sequence is that of Chaperone protein DnaJ from Thermosynechococcus vestitus (strain NIES-2133 / IAM M-273 / BP-1).